A 342-amino-acid polypeptide reads, in one-letter code: Succinylglutamate desuccinylase (342 aa).

3 residues coordinate Zn(2+): H63, E66, and H155. E219 is a catalytic residue.

The protein belongs to the AspA/AstE family. Succinylglutamate desuccinylase subfamily. Zn(2+) serves as cofactor.

The catalysed reaction is N-succinyl-L-glutamate + H2O = L-glutamate + succinate. Its pathway is amino-acid degradation; L-arginine degradation via AST pathway; L-glutamate and succinate from L-arginine: step 5/5. Functionally, transforms N(2)-succinylglutamate into succinate and glutamate. The sequence is that of Succinylglutamate desuccinylase from Vibrio vulnificus (strain CMCP6).